A 375-amino-acid polypeptide reads, in one-letter code: Flagellin (375 aa).

This sequence belongs to the bacterial flagellin family.

It localises to the secreted. It is found in the bacterial flagellum. Flagellin is the subunit protein which polymerizes to form the filaments of bacterial flagella. Flagella are an important component in the invasiveness of B.bacilliformis. This is Flagellin from Bartonella bacilliformis.